The sequence spans 889 residues: Alanine--tRNA ligase (889 aa).

Zn(2+) is bound by residues H587, H591, C691, and H695. 2 disordered regions span residues 734–760 (QQEQ…EENK) and 866–889 (AQGG…MILG). Over residues 872–881 (DTSKKDEAIS) the composition is skewed to basic and acidic residues.

It belongs to the class-II aminoacyl-tRNA synthetase family. Zn(2+) serves as cofactor.

The protein resides in the cytoplasm. The enzyme catalyses tRNA(Ala) + L-alanine + ATP = L-alanyl-tRNA(Ala) + AMP + diphosphate. Functionally, catalyzes the attachment of alanine to tRNA(Ala) in a two-step reaction: alanine is first activated by ATP to form Ala-AMP and then transferred to the acceptor end of tRNA(Ala). Also edits incorrectly charged Ser-tRNA(Ala) and Gly-tRNA(Ala) via its editing domain. This is Alanine--tRNA ligase from Nitrosopumilus maritimus (strain SCM1).